A 137-amino-acid chain; its full sequence is MPPKPADKKPASKAPATASKAPEKKDAGKKTAASGDKKKRTKARKETYSSYIYKVLKQVHPDTGISNRAMSILNSFVNDIFERVATEASKLAAYNKKSTISSREIQTSVRLILPGELAKHAVSEGTKAVTKYSSSTK.

Basic and acidic residues predominate over residues 1–10; it reads MPPKPADKKP. Residues 1–45 are disordered; that stretch reads MPPKPADKKPASKAPATASKAPEKKDAGKKTAASGDKKKRTKARK. N6-acetyllysine; alternate occurs at positions 8 and 9. Glycyl lysine isopeptide (Lys-Gly) (interchain with G-Cter in SUMO); alternate cross-links involve residues lysine 8 and lysine 9. Serine 12 carries the post-translational modification Phosphoserine. The residue at position 13 (lysine 13) is an N6-acetyllysine. The residue at position 24 (lysine 24) is an N6-acetyllysine; alternate. Residue lysine 24 forms a Glycyl lysine isopeptide (Lys-Gly) (interchain with G-Cter in SUMO); alternate linkage. Lysine 25 is covalently cross-linked (Glycyl lysine isopeptide (Lys-Gly) (interchain with G-Cter in SUMO)). Lysine 131 participates in a covalent cross-link: Glycyl lysine isopeptide (Lys-Gly) (interchain with G-Cter in ubiquitin).

The protein belongs to the histone H2B family. As to quaternary structure, the nucleosome is a histone octamer containing two molecules each of H2A, H2B, H3 and H4 assembled in one H3-H4 heterotetramer and two H2A-H2B heterodimers. The octamer wraps approximately 147 bp of DNA. In terms of processing, monoubiquitinated by the ubc-2-bre-1 complex to form H2BK123ub1. H2BK123ub1 gives a specific tag for epigenetic transcriptional activation and is also prerequisite for H3K4me and H3K79me formation. H2BK123ub1 also modulates the formation of double-strand breaks during meiosis and is a prerequisite for DNA-damage checkpoint activation. Phosphorylated by ste-20 to form H2BS10ph during progression through meiotic prophase. May be correlated with chromosome condensation. Post-translationally, acetylated by gcn-5 to form H2BK11ac and H2BK16ac. H2BK16ac can also be formed by esa-1. Acetylation of N-terminal lysines and particularly formation of H2BK11acK16ac has a positive effect on transcription. In terms of processing, sumoylation to form H2BK6su or H2BK7su, and probably also H2BK16su or H2BK17su, occurs preferentially near the telomeres and represses gene transcription.

Its subcellular location is the nucleus. It localises to the chromosome. Functionally, core component of nucleosome. Nucleosomes wrap and compact DNA into chromatin, limiting DNA accessibility to the cellular machineries which require DNA as a template. Histones thereby play a central role in transcription regulation, DNA repair, DNA replication and chromosomal stability. DNA accessibility is regulated via a complex set of post-translational modifications of histones, also called histone code, and nucleosome remodeling. The sequence is that of Histone H2B (hh2b) from Neurospora crassa (strain ATCC 24698 / 74-OR23-1A / CBS 708.71 / DSM 1257 / FGSC 987).